Reading from the N-terminus, the 264-residue chain is S-adenosylmethionine decarboxylase proenzyme (264 aa).

S112 (schiff-base intermediate with substrate; via pyruvic acid) is an active-site residue. Pyruvic acid (Ser); by autocatalysis is present on S112. The Proton acceptor; for processing activity role is filled by H117. C140 serves as the catalytic Proton donor; for catalytic activity.

The protein belongs to the prokaryotic AdoMetDC family. Type 2 subfamily. In terms of assembly, heterooctamer of four alpha and four beta chains arranged as a tetramer of alpha/beta heterodimers. The cofactor is pyruvate. In terms of processing, is synthesized initially as an inactive proenzyme. Formation of the active enzyme involves a self-maturation process in which the active site pyruvoyl group is generated from an internal serine residue via an autocatalytic post-translational modification. Two non-identical subunits are generated from the proenzyme in this reaction, and the pyruvate is formed at the N-terminus of the alpha chain, which is derived from the carboxyl end of the proenzyme. The post-translation cleavage follows an unusual pathway, termed non-hydrolytic serinolysis, in which the side chain hydroxyl group of the serine supplies its oxygen atom to form the C-terminus of the beta chain, while the remainder of the serine residue undergoes an oxidative deamination to produce ammonia and the pyruvoyl group blocking the N-terminus of the alpha chain.

The enzyme catalyses S-adenosyl-L-methionine + H(+) = S-adenosyl 3-(methylsulfanyl)propylamine + CO2. The protein operates within amine and polyamine biosynthesis; S-adenosylmethioninamine biosynthesis; S-adenosylmethioninamine from S-adenosyl-L-methionine: step 1/1. Functionally, catalyzes the decarboxylation of S-adenosylmethionine to S-adenosylmethioninamine (dcAdoMet), the propylamine donor required for the synthesis of the polyamines spermine and spermidine from the diamine putrescine. This is S-adenosylmethionine decarboxylase proenzyme from Escherichia coli O45:K1 (strain S88 / ExPEC).